A 378-amino-acid chain; its full sequence is 23S rRNA (uracil(747)-C(5))-methyltransferase RlmC (378 aa).

Residues Cys3, Cys11, Cys14, and Cys87 each coordinate [4Fe-4S] cluster. S-adenosyl-L-methionine contacts are provided by Gln212, Phe241, Glu262, and Asn309. Cys336 (nucleophile) is an active-site residue.

The protein belongs to the class I-like SAM-binding methyltransferase superfamily. RNA M5U methyltransferase family. RlmC subfamily.

The enzyme catalyses uridine(747) in 23S rRNA + S-adenosyl-L-methionine = 5-methyluridine(747) in 23S rRNA + S-adenosyl-L-homocysteine + H(+). Its function is as follows. Catalyzes the formation of 5-methyl-uridine at position 747 (m5U747) in 23S rRNA. The polypeptide is 23S rRNA (uracil(747)-C(5))-methyltransferase RlmC (Shewanella pealeana (strain ATCC 700345 / ANG-SQ1)).